We begin with the raw amino-acid sequence, 303 residues long: N-acetyl-D-glucosamine kinase (303 aa).

Residues 4–11 (GFDIGGTK) and 133–140 (GVGGGLIF) contribute to the ATP site. Zn(2+) contacts are provided by His157, Cys177, Cys179, and Cys184.

It belongs to the ROK (NagC/XylR) family. NagK subfamily.

It catalyses the reaction N-acetyl-D-glucosamine + ATP = N-acetyl-D-glucosamine 6-phosphate + ADP + H(+). It participates in cell wall biogenesis; peptidoglycan recycling. Functionally, catalyzes the phosphorylation of N-acetyl-D-glucosamine (GlcNAc) derived from cell-wall degradation, yielding GlcNAc-6-P. The polypeptide is N-acetyl-D-glucosamine kinase (Escherichia coli O81 (strain ED1a)).